Consider the following 892-residue polypeptide: Protein argonaute 11 (892 aa).

Residues 1–17 (MSSRGGGVGGRRGGPGG) are compositionally biased toward gly residues. 2 disordered regions span residues 1–68 (MSSR…ALQP) and 86–117 (MEAR…GALP). Over residues 86-107 (MEAREGASSSSSASAPAVGEVE) the composition is skewed to low complexity. One can recognise a PAZ domain in the interval 248 to 362 (SLKQFLAGTY…LPMEVCRIVK (115 aa)). The 308-residue stretch at 541–848 (LLVIVLPDAN…AASRARHYLE (308 aa)) folds into the Piwi domain. Residues 850–876 (GSLPDHGSSSASAAGGSRRNDRGVPVK) form a disordered region. Residues 856–866 (GSSSASAAGGS) are compositionally biased toward low complexity. Positions 867 to 876 (RRNDRGVPVK) are enriched in basic and acidic residues.

This sequence belongs to the argonaute family. Ago subfamily.

Functionally, probably involved in the RNA silencing pathway. May bind to short RNAs such as microRNAs (miRNAs) or short interfering RNAs (siRNAs), and represses the translation of mRNAs which are complementary to them. This is Protein argonaute 11 (AGO11) from Oryza sativa subsp. japonica (Rice).